Here is a 145-residue protein sequence, read N- to C-terminus: Pseudoazurin (145 aa).

A signal peptide spans 1–22 (MFHHSLAAAAAALLALAAPGFA). Residues 27-115 (VHMLNKGESG…MGMVGLVQVG (89 aa)) form the Plastocyanin-like domain. Cu cation-binding residues include His62, Cys100, His103, and Met108. A disordered region spans residues 126-145 (TAKMPKKARERMDAELAQVN).

Homodimer. Requires Cu cation as cofactor.

It is found in the periplasm. Functionally, this soluble electron transfer copper protein is required for the inactivation of copper-containing nitrite reductase in the presence of oxygen. In Paracoccus pantotrophus (Thiosphaera pantotropha), this protein is Pseudoazurin (pazS).